An 808-amino-acid polypeptide reads, in one-letter code: Phospholipase D alpha 1 (808 aa).

Positions 1 to 30 are excised as a propeptide; that stretch reads MAQISLHGTLHVTIYEVDKLHSGGGPHFFR. In terms of domain architecture, C2 spans 1 to 125; that stretch reads MAQISLHGTL…LDGEEIDRWV (125 aa). Ca(2+) is bound at residue D186. The PLD phosphodiesterase 1 domain maps to 326-364; it reads TMFTHHQKIVVVDSAMPNGDSQRRRIVSFVGGLDLCDGR. Active-site residues include H331, K333, and D338. An a 1,2-diacyl-sn-glycero-3-phosphate-binding site is contributed by H331. H370 and H404 together coordinate Ca(2+). A 1,2-diacyl-sn-glycero-3-phosphate-binding residues include Q520 and H659. The PLD phosphodiesterase 2 domain occupies 654–681; it reads FMIYVHTKMMIVDDEYIIIGSANINQRS. Active-site residues include H659, K661, and D666. Residue E720 participates in Ca(2+) binding.

Belongs to the phospholipase D family. C2-PLD subfamily. Requires Ca(2+) as cofactor. As to expression, expression is higher in radicle than in endosperm.

The protein localises to the cytoplasm. It is found in the membrane. Its subcellular location is the vacuole. It localises to the endoplasmic reticulum. The protein resides in the plastid. The protein localises to the cell membrane. The enzyme catalyses a 1,2-diacyl-sn-glycero-3-phosphocholine + H2O = a 1,2-diacyl-sn-glycero-3-phosphate + choline + H(+). Hydrolyzes glycerol-phospholipids at the terminal phosphodiesteric bond. Plays an important role in various cellular processes, including phytohormone action, vesicular trafficking, secretion, cytoskeletal arrangement, meiosis, tumor promotion, pathogenesis, membrane deterioration and senescence. In Ricinus communis (Castor bean), this protein is Phospholipase D alpha 1 (PLD1).